Here is a 496-residue protein sequence, read N- to C-terminus: Probable cytosol aminopeptidase (496 aa).

The Mn(2+) site is built by lysine 262 and aspartate 267. Lysine 274 is a catalytic residue. 3 residues coordinate Mn(2+): aspartate 285, aspartate 344, and glutamate 346. The active site involves arginine 348.

Belongs to the peptidase M17 family. It depends on Mn(2+) as a cofactor.

Its subcellular location is the cytoplasm. It carries out the reaction Release of an N-terminal amino acid, Xaa-|-Yaa-, in which Xaa is preferably Leu, but may be other amino acids including Pro although not Arg or Lys, and Yaa may be Pro. Amino acid amides and methyl esters are also readily hydrolyzed, but rates on arylamides are exceedingly low.. The catalysed reaction is Release of an N-terminal amino acid, preferentially leucine, but not glutamic or aspartic acids.. Functionally, presumably involved in the processing and regular turnover of intracellular proteins. Catalyzes the removal of unsubstituted N-terminal amino acids from various peptides. The protein is Probable cytosol aminopeptidase of Rhizobium leguminosarum bv. trifolii (strain WSM2304).